Consider the following 218-residue polypeptide: UPF0502 protein Geob_1184 (218 aa).

This sequence belongs to the UPF0502 family.

The polypeptide is UPF0502 protein Geob_1184 (Geotalea daltonii (strain DSM 22248 / JCM 15807 / FRC-32) (Geobacter daltonii)).